The sequence spans 958 residues: Coiled-coil domain-containing protein 80 (958 aa).

Positions 1 to 21 (MNWMPALSLALLWTAWLVCGS) are cleaved as a signal peptide. 5 disordered regions span residues 30–99 (RGSH…TRTR), 290–335 (VVED…TVRK), 358–396 (TATR…TTTE), 424–452 (ANRR…RYES), and 467–617 (ASMS…QPPR). Residues 358–389 (TATRATTRTVTTASRPTTTTTPLPTTQRTWTT) show a composition bias toward low complexity. Basic and acidic residues-rich tracts occupy residues 425–438 (NRRD…EKHL) and 471–487 (RFKD…HRDL). The segment covering 495-506 (KPTKTKPPKKKT) has biased composition (basic residues). Basic and acidic residues-rich tracts occupy residues 547 to 589 (KKHE…DKDR) and 597 to 606 (SRTENEDFPK).

The protein belongs to the CCDC80 family. In terms of assembly, binds to various extracellular matrix proteins.

It is found in the secreted. The protein resides in the extracellular space. The protein localises to the extracellular matrix. Its function is as follows. Promotes cell adhesion and matrix assembly. May play a role in eye formation. This Gallus gallus (Chicken) protein is Coiled-coil domain-containing protein 80 (CCDC80).